Here is a 485-residue protein sequence, read N- to C-terminus: Subtilisin-like protease 1 (485 aa).

The first 19 residues, 1–19 (MGIFRFISISLAAVSAANA), serve as a signal peptide directing secretion. Residues 20-116 (GHILSMGHAK…VEPDTTITIH (97 aa)) constitute a propeptide that is removed on maturation. Residues 34–116 (SYIVVMKDGT…VEPDTTITIH (83 aa)) enclose the Inhibitor I9 domain. One can recognise a Peptidase S8 domain in the interval 126–400 (SWGLARISSQ…NILINNGDAK (275 aa)). Catalysis depends on charge relay system residues Asp-158 and His-190. Asn-251 carries an N-linked (GlcNAc...) asparagine glycan. Ser-345 functions as the Charge relay system in the catalytic mechanism. The span at 377–394 (GTSSVTNPGPGTRTNILI) shows a compositional bias: polar residues. The interval 377–462 (GTSSVTNPGP…HTPFPNDDFN (86 aa)) is disordered. Residues 409–418 (PSQPPKPSQP) are compositionally biased toward pro residues. A compositionally biased stretch (low complexity) spans 419-428 (SKPQQPSEPQ). Residues 433–455 (PQEPAPGQPAPAPAPVPQHPHTP) show a composition bias toward pro residues.

This sequence belongs to the peptidase S8 family.

It is found in the secreted. Its function is as follows. Secreted subtilisin-like serine protease with keratinolytic activity that contributes to pathogenicity. This chain is Subtilisin-like protease 1 (SUB1), found in Arthroderma otae (strain ATCC MYA-4605 / CBS 113480) (Microsporum canis).